A 185-amino-acid polypeptide reads, in one-letter code: Elongation factor P (185 aa).

The protein belongs to the elongation factor P family.

The protein localises to the cytoplasm. It participates in protein biosynthesis; polypeptide chain elongation. In terms of biological role, involved in peptide bond synthesis. Stimulates efficient translation and peptide-bond synthesis on native or reconstituted 70S ribosomes in vitro. Probably functions indirectly by altering the affinity of the ribosome for aminoacyl-tRNA, thus increasing their reactivity as acceptors for peptidyl transferase. This Mesomycoplasma hyopneumoniae (strain 7448) (Mycoplasma hyopneumoniae) protein is Elongation factor P.